The following is a 992-amino-acid chain: Tubulin glycylase 3A (992 aa).

Disordered regions lie at residues 1–54 (MQTR…NRVV) and 68–113 (QSDS…LGAP). The segment covering 7–26 (SEPHRSRDQVTDGDRNRDQP) has biased composition (basic and acidic residues). Residues 39–49 (VTPPAAPPPTP) show a composition bias toward pro residues. Residues 295 to 645 (FKLTACVAFL…RRTDPKAELG (351 aa)) form the TTL domain. Residues 457 to 460 (QKYI), Lys470, and Asp472 contribute to the ATP site. Disordered stretches follow at residues 746–766 (SLCS…TATP) and 791–828 (KRNT…PVES). Positions 794–807 (TGGSLSGEQVQSTA) are enriched in polar residues.

It localises to the cytoplasm. The protein resides in the cytoskeleton. Its function is as follows. Polylycylase which modifies alpha- and beta-tubulin, generating side chains of glycine on the gamma-carboxyl groups of specific glutamate residues within the C-terminal tail of alpha- and beta-tubulin. Involved both in the side-chain initiation and elongation steps of the polyglycylation reaction by adding a single glycine chain to generate monoglycine side chains and by elongating monoglycine side chains to polyglycine side chains. In Drosophila melanogaster (Fruit fly), this protein is Tubulin glycylase 3A (TTLL3A).